Reading from the N-terminus, the 76-residue chain is UPF0291 protein BCE_1981 (76 aa).

This sequence belongs to the UPF0291 family.

It localises to the cytoplasm. The sequence is that of UPF0291 protein BCE_1981 from Bacillus cereus (strain ATCC 10987 / NRS 248).